Consider the following 594-residue polypeptide: Aspartate--tRNA(Asp/Asn) ligase (594 aa).

Residue Glu-175 participates in L-aspartate binding. Residues 199 to 202 are aspartate; it reads QIYK. Arg-221 and His-454 together coordinate L-aspartate. 221-223 is an ATP binding site; it reads RDE. Residue Glu-488 coordinates ATP. Arg-495 serves as a coordination point for L-aspartate. 540-543 is an ATP binding site; the sequence is GIDR.

This sequence belongs to the class-II aminoacyl-tRNA synthetase family. Type 1 subfamily. As to quaternary structure, homodimer.

The protein localises to the cytoplasm. The enzyme catalyses tRNA(Asx) + L-aspartate + ATP = L-aspartyl-tRNA(Asx) + AMP + diphosphate. Its function is as follows. Aspartyl-tRNA synthetase with relaxed tRNA specificity since it is able to aspartylate not only its cognate tRNA(Asp) but also tRNA(Asn). Reaction proceeds in two steps: L-aspartate is first activated by ATP to form Asp-AMP and then transferred to the acceptor end of tRNA(Asp/Asn). The sequence is that of Aspartate--tRNA(Asp/Asn) ligase from Chelativorans sp. (strain BNC1).